We begin with the raw amino-acid sequence, 283 residues long: Phenylethanolamine N-methyltransferase (283 aa).

Phosphoserine is present on serine 7. S-adenosyl-L-methionine-binding positions include tyrosine 35, tyrosine 40, 79 to 80 (GS), tyrosine 85, aspartate 101, asparagine 106, 158 to 159 (DV), and alanine 181. Residues glutamate 219 and aspartate 267 each contribute to the octopamine site.

Belongs to the class I-like SAM-binding methyltransferase superfamily. NNMT/PNMT/TEMT family. In terms of processing, the N-terminus is blocked. As to expression, expressed in the adrenal medulla.

It catalyses the reaction phenylethanolamine + S-adenosyl-L-methionine = N-methylphenylethanolamine + S-adenosyl-L-homocysteine + H(+). It carries out the reaction (R)-noradrenaline + S-adenosyl-L-methionine = (R)-adrenaline + S-adenosyl-L-homocysteine + H(+). The catalysed reaction is (R)-normetanephrine + S-adenosyl-L-methionine = (R)-metanephrine + S-adenosyl-L-homocysteine + H(+). The enzyme catalyses (R)-octopamine + S-adenosyl-L-methionine = (R)-synephrine + S-adenosyl-L-homocysteine + H(+). It participates in catecholamine biosynthesis; (R)-adrenaline biosynthesis; (R)-adrenaline from (R)-noradrenaline: step 1/1. Its activity is regulated as follows. Inhibited by p-hydroxymercuribenzoate and p-chloromercuriphenylsulfonate. Its function is as follows. Catalyzes the transmethylation of nonepinephrine (noradrenaline) to form epinephrine (adrenaline), using S-adenosyl-L-methionine as the methyl donor. Other substrates include phenylethanolamine and octopamine. Also methylates normetanephrine. The chain is Phenylethanolamine N-methyltransferase (PNMT) from Bos taurus (Bovine).